The chain runs to 101 residues: Cell cycle protein GpsB (101 aa).

The stretch at 34–71 (LDMVIKDYETFNQEIEKLQQENLHLSKQLEEAVEQGKR) forms a coiled coil.

This sequence belongs to the GpsB family. In terms of assembly, forms polymers through the coiled coil domains. Interacts with PBP1, MreC and EzrA.

It is found in the cytoplasm. Divisome component that associates with the complex late in its assembly, after the Z-ring is formed, and is dependent on DivIC and PBP2B for its recruitment to the divisome. Together with EzrA, is a key component of the system that regulates PBP1 localization during cell cycle progression. Its main role could be the removal of PBP1 from the cell pole after pole maturation is completed. Also contributes to the recruitment of PBP1 to the division complex. Not essential for septum formation. The sequence is that of Cell cycle protein GpsB from Bacillus pumilus (strain SAFR-032).